A 639-amino-acid polypeptide reads, in one-letter code: Poly(A)-specific ribonuclease PARN (639 aa).

Positions 28 and 30 each coordinate a divalent metal cation. Phosphoserine occurs at positions 163 and 167. Residues 178–245 enclose the R3H domain; it reads KKFIDQVVEK…ERYIVISKVD (68 aa). Position 220 is an N6-acetyllysine (Lys220). A divalent metal cation is bound by residues Asp292 and Asp382. Residue Lys499 is modified to N6-acetyllysine. Ser530 bears the Phosphoserine mark. Ser557 is modified (phosphoserine; by MAPKAPK2). The interval 560-639 is disordered; it reads APSTVGKRNL…ATLFEVPDTW (80 aa). A phosphoserine mark is found at Ser583 and Ser587. The segment covering 606 to 615 has biased composition (basic residues); that stretch reads KKAKKLKRMK. A phosphoserine mark is found at Ser619, Ser623, and Ser628. Thr631 is subject to Phosphothreonine.

The protein belongs to the CAF1 family. As to quaternary structure, homodimer. Found in a mRNA decay complex with RENT1, RENT2 and RENT3B. Interacts with KHSRP. Interacts with CELF1/CUGBP1. Interacts with ZC3HAV1 in an RNA-independent manner. Interacts with DHX36. Requires Mg(2+) as cofactor. Post-translationally, phosphorylation by MAPKAPK2, preventing GADD45A mRNA degradation after genotoxic stress. In terms of tissue distribution, ubiquitous.

The protein localises to the nucleus. It localises to the cytoplasm. Its subcellular location is the nucleolus. It carries out the reaction Exonucleolytic cleavage of poly(A) to 5'-AMP.. Its function is as follows. 3'-exoribonuclease that has a preference for poly(A) tails of mRNAs, thereby efficiently degrading poly(A) tails. Exonucleolytic degradation of the poly(A) tail is often the first step in the decay of eukaryotic mRNAs and is also used to silence certain maternal mRNAs translationally during oocyte maturation and early embryonic development. Interacts with both the 3'-end poly(A) tail and the 5'-end cap structure during degradation, the interaction with the cap structure being required for an efficient degradation of poly(A) tails. Involved in nonsense-mediated mRNA decay, a critical process of selective degradation of mRNAs that contain premature stop codons. Also involved in degradation of inherently unstable mRNAs that contain AU-rich elements (AREs) in their 3'-UTR, possibly via its interaction with KHSRP. Probably mediates the removal of poly(A) tails of AREs mRNAs, which constitutes the first step of destabilization. Also able to recognize and trim poly(A) tails of microRNAs such as MIR21 and H/ACA box snoRNAs (small nucleolar RNAs) leading to microRNAs degradation or snoRNA increased stability. In Homo sapiens (Human), this protein is Poly(A)-specific ribonuclease PARN (PARN).